The sequence spans 218 residues: UPF0502 protein Geob_1184 (218 aa).

Belongs to the UPF0502 family.

The protein is UPF0502 protein Geob_1184 of Geotalea daltonii (strain DSM 22248 / JCM 15807 / FRC-32) (Geobacter daltonii).